The following is a 357-amino-acid chain: Poly(3-hydroxyalkanoate) polymerase subunit PhaE (357 aa).

The interval 320–357 (AALAGEEPATKPATALRSPAPAAKAPARRRTTKTNPAD) is disordered. The segment covering 331–344 (PATALRSPAPAAKA) has biased composition (low complexity).

Belongs to the PHA/PHB synthase family. Type III PhaE subfamily. A large complex of PhaC and PhaE; the ratio of the subunits has been estimated to be from 1:1 to 4:1, with more PhaE than PhaC.

It localises to the cytoplasm. It functions in the pathway biopolymer metabolism; poly-(R)-3-hydroxybutanoate biosynthesis. Functionally, polymerizes D(-)-3-hydroxybutyryl-CoA to create polyhydroxybutyrate (PHB) which consists of thousands of hydroxybutyrate molecules linked end to end. This subunit has no catalytic activity but enhances the activity of PhaC, the catalytic subunit, 100-fold. This is Poly(3-hydroxyalkanoate) polymerase subunit PhaE from Allochromatium vinosum (strain ATCC 17899 / DSM 180 / NBRC 103801 / NCIMB 10441 / D) (Chromatium vinosum).